A 475-amino-acid polypeptide reads, in one-letter code: Sensor histidine kinase QseE (475 aa).

At 1–13 (MKRWPVFPRSLRQ) the chain is on the cytoplasmic side. The chain crosses the membrane as a helical span at residues 14–34 (LVMLAFLLILLPLLVLAWQAW). Topologically, residues 35–173 (QSLNALSDQA…LQREIAERGQ (139 aa)) are periplasmic. The chain crosses the membrane as a helical span at residues 174 to 194 (YFGWQSLVLFLVSLVMVLLFT). The Cytoplasmic segment spans residues 195 to 475 (RMIIGPVKNI…IELPSSKNTK (281 aa)). Residues 256–472 (HLSHELKTPL…CFRIELPSSK (217 aa)) form the Histidine kinase domain. A Phosphohistidine; by autocatalysis modification is found at histidine 259.

Autophosphorylated.

The protein localises to the cell inner membrane. It carries out the reaction ATP + protein L-histidine = ADP + protein N-phospho-L-histidine.. In terms of biological role, member of the two-component regulatory system QseF/QseE involved in the regulation of virulence and metabolism in EHEC. Required for pedestal formation in host epithelial cells during infection. Autophosphorylates in response to epinephrine, sulfate or phosphate and then probably transfers its phosphate group to QseF. The polypeptide is Sensor histidine kinase QseE (qseE) (Escherichia coli O157:H7).